Reading from the N-terminus, the 419-residue chain is Metacaspase-1A (419 aa).

The interval Met1–Gln89 is disordered. Polar residues predominate over residues Asn41–Gly51. Residues Tyr59 to Gln71 are compositionally biased toward low complexity. Active-site residues include His190 and Cys246.

This sequence belongs to the peptidase C14B family.

Its function is as follows. Involved in cell death (apoptosis). This Aspergillus oryzae (strain ATCC 42149 / RIB 40) (Yellow koji mold) protein is Metacaspase-1A (casA).